Consider the following 488-residue polypeptide: GTPase Der (488 aa).

EngA-type G domains follow at residues proline 3–methionine 166 and isoleucine 200–threonine 373. GTP is bound by residues glycine 9–serine 16, aspartate 56–isoleucine 60, asparagine 118–aspartate 121, glycine 206–serine 213, aspartate 253–valine 257, and asparagine 318–aspartate 321. The 85-residue stretch at arginine 374 to aspartate 458 folds into the KH-like domain.

Belongs to the TRAFAC class TrmE-Era-EngA-EngB-Septin-like GTPase superfamily. EngA (Der) GTPase family. Associates with the 50S ribosomal subunit.

GTPase that plays an essential role in the late steps of ribosome biogenesis. In Shewanella amazonensis (strain ATCC BAA-1098 / SB2B), this protein is GTPase Der.